The primary structure comprises 311 residues: Aspartate carbamoyltransferase catalytic subunit (311 aa).

Positions 55 and 56 each coordinate carbamoyl phosphate. An L-aspartate-binding site is contributed by K85. Carbamoyl phosphate-binding residues include R106, H135, and Q138. L-aspartate is bound by residues R168 and R230. Carbamoyl phosphate contacts are provided by L268 and P269.

This sequence belongs to the aspartate/ornithine carbamoyltransferase superfamily. ATCase family. In terms of assembly, heterododecamer (2C3:3R2) of six catalytic PyrB chains organized as two trimers (C3), and six regulatory PyrI chains organized as three dimers (R2).

It carries out the reaction carbamoyl phosphate + L-aspartate = N-carbamoyl-L-aspartate + phosphate + H(+). The protein operates within pyrimidine metabolism; UMP biosynthesis via de novo pathway; (S)-dihydroorotate from bicarbonate: step 2/3. Catalyzes the condensation of carbamoyl phosphate and aspartate to form carbamoyl aspartate and inorganic phosphate, the committed step in the de novo pyrimidine nucleotide biosynthesis pathway. The sequence is that of Aspartate carbamoyltransferase catalytic subunit from Pectobacterium atrosepticum (strain SCRI 1043 / ATCC BAA-672) (Erwinia carotovora subsp. atroseptica).